The chain runs to 641 residues: Lipase (641 aa).

A signal peptide spans 1–38; the sequence is MKETKHQHTFSIRKSAYGAASVMVASCIFVIGGGVAEA. 2 disordered regions span residues 41–174 and 206–246; these read STTQ…PSVD and TVSP…KPTV. Positions 53-64 are enriched in low complexity; that stretch reads QTSQQETHTHQT. Residues 73–94 show a composition bias toward basic and acidic residues; the sequence is TPEHVDDSKEATPLPEKAESPK. 2 stretches are compositionally biased toward polar residues: residues 95-106 and 127-139; these read TEVTVQPSSHTQ and PEST…VESN. Over residues 140–165 the composition is skewed to basic and acidic residues; the sequence is KATENEMSPVEHHASNVEKREDRLET. Positions 227–239 are enriched in polar residues; the sequence is ENTTAQNKFTSQA. Catalysis depends on serine 369, which acts as the Nucleophile. Glycine 535 provides a ligand contact to Ca(2+). Aspartate 559 acts as the Charge relay system in catalysis. Aspartate 599 is a binding site for Ca(2+). The active-site Charge relay system is histidine 600. Ca(2+)-binding residues include aspartate 602, aspartate 607, and aspartate 610.

Belongs to the AB hydrolase superfamily. Lipase family. The cofactor is Ca(2+).

The protein localises to the secreted. It catalyses the reaction a triacylglycerol + H2O = a diacylglycerol + a fatty acid + H(+). The enzyme catalyses a 1,2-diacyl-sn-glycero-3-phosphocholine + H2O = a 2-acyl-sn-glycero-3-phosphocholine + a fatty acid + H(+). Functionally, has a broad substrate specificity hydrolyzing a variety of triglycerides and phosphatidylcholines. In Staphylococcus hyicus, this protein is Lipase (lip).